A 436-amino-acid chain; its full sequence is Adenylosuccinate synthetase (436 aa).

GTP-binding positions include Gly22–Lys28 and Gly50–Glu52. Asp23 (proton acceptor) is an active-site residue. Mg(2+)-binding residues include Asp23 and Gly50. IMP is bound by residues Asp23–Lys26, Asn48–His51, Thr141, Arg155, Asn231, Thr246, and Arg310. The Proton donor role is filled by His51. Val306–Arg312 serves as a coordination point for substrate. GTP is bound by residues Arg312, Lys338–Asp340, and Gly424–Gly426.

This sequence belongs to the adenylosuccinate synthetase family. As to quaternary structure, homodimer. Mg(2+) is required as a cofactor.

Its subcellular location is the cytoplasm. The enzyme catalyses IMP + L-aspartate + GTP = N(6)-(1,2-dicarboxyethyl)-AMP + GDP + phosphate + 2 H(+). The protein operates within purine metabolism; AMP biosynthesis via de novo pathway; AMP from IMP: step 1/2. In terms of biological role, plays an important role in the salvage pathway for purine nucleotide biosynthesis. Catalyzes the first committed step in the biosynthesis of AMP from IMP. The sequence is that of Adenylosuccinate synthetase from Babesia bovis.